The primary structure comprises 146 residues: Hemoglobin subunit beta (146 aa).

A Blocked amino end (Thr) modification is found at T1. The Globin domain occupies H2–H146. The heme b site is built by H63 and H92.

It belongs to the globin family. Heterotetramer of two alpha chains and two beta chains. In terms of tissue distribution, red blood cells.

Its function is as follows. Involved in oxygen transport from the lung to the various peripheral tissues. In Caretta caretta (Loggerhead sea turtle), this protein is Hemoglobin subunit beta (HBB).